The following is a 356-amino-acid chain: S-adenosylmethionine:tRNA ribosyltransferase-isomerase (356 aa).

Belongs to the QueA family. Monomer.

The protein localises to the cytoplasm. The enzyme catalyses 7-aminomethyl-7-carbaguanosine(34) in tRNA + S-adenosyl-L-methionine = epoxyqueuosine(34) in tRNA + adenine + L-methionine + 2 H(+). The protein operates within tRNA modification; tRNA-queuosine biosynthesis. Transfers and isomerizes the ribose moiety from AdoMet to the 7-aminomethyl group of 7-deazaguanine (preQ1-tRNA) to give epoxyqueuosine (oQ-tRNA). The chain is S-adenosylmethionine:tRNA ribosyltransferase-isomerase from Escherichia coli O81 (strain ED1a).